We begin with the raw amino-acid sequence, 260 residues long: Aliphatic sulfonates import ATP-binding protein SsuB 1 (260 aa).

An ABC transporter domain is found at 29–243 (VRVDGLTRSF…DITDPRFAEL (215 aa)). 61 to 68 (GRSGCGKS) serves as a coordination point for ATP.

The protein belongs to the ABC transporter superfamily. Aliphatic sulfonates importer (TC 3.A.1.17.2) family. As to quaternary structure, the complex is composed of two ATP-binding proteins (SsuB), two transmembrane proteins (SsuC) and a solute-binding protein (SsuA).

The protein localises to the cell membrane. It catalyses the reaction ATP + H2O + aliphatic sulfonate-[sulfonate-binding protein]Side 1 = ADP + phosphate + aliphatic sulfonateSide 2 + [sulfonate-binding protein]Side 1.. Functionally, part of the ABC transporter complex SsuABC involved in aliphatic sulfonates import. Responsible for energy coupling to the transport system. The sequence is that of Aliphatic sulfonates import ATP-binding protein SsuB 1 from Streptomyces avermitilis (strain ATCC 31267 / DSM 46492 / JCM 5070 / NBRC 14893 / NCIMB 12804 / NRRL 8165 / MA-4680).